Reading from the N-terminus, the 391-residue chain is Cell cycle checkpoint control protein RAD9A (391 aa).

At Tyr-28 the chain carries Phosphotyrosine. Positions 51-91 (FLFAPLFFQQYQAATPGQDLLRCKILMKSFLSVFRSLAMLE) are possesses 3'-5' exonuclease activity. Residues 266–391 (SDTDSHSQDL…VLAEDSEGEG (126 aa)) form a sufficient for interaction with ABL1 region. Over residues 268-282 (TDSHSQDLGSPERHQ) the composition is skewed to basic and acidic residues. Disordered regions lie at residues 268–301 (TDSH…FAND) and 319–391 (SRVL…EGEG). A phosphoserine mark is found at Ser-272, Ser-277, and Ser-328. Ser-341 is modified (phosphoserine; by CK2). Phosphoserine is present on residues Ser-375 and Ser-380. Ser-387 is subject to Phosphoserine; by CK2.

It belongs to the rad9 family. In terms of assembly, component of the toroidal 9-1-1 (RAD9-RAD1-HUS1) complex, composed of RAD9A, RAD1 and HUS1. The 9-1-1 complex associates with LIG1, POLB, FEN1, RAD17, HDAC1, RPA1 and RPA2. The 9-1-1 complex associates with the RAD17-RFC complex. RAD9A interacts with BCL2L1, FEN1, RAD9B, ABL1, RPA1, ATAD5 and RPA2. Interacts with DNAJC7. Interacts (when phosphorylated) with TOPBP1. Constitutively phosphorylated on serine and threonine amino acids in absence of DNA damage. Hyperphosphorylated by PRKCD and ABL1 upon DNA damage. Its phosphorylation by PRKCD may be required for the formation of the 9-1-1 complex. Phosphorylated at Ser-341 and Ser-387 by CK2, promoting interaction with TOPBP1.

It localises to the nucleus. The enzyme catalyses Exonucleolytic cleavage in the 3'- to 5'-direction to yield nucleoside 5'-phosphates.. Its function is as follows. Component of the 9-1-1 cell-cycle checkpoint response complex that plays a major role in DNA repair. The 9-1-1 complex is recruited to DNA lesion upon damage by the RAD17-replication factor C (RFC) clamp loader complex. Acts then as a sliding clamp platform on DNA for several proteins involved in long-patch base excision repair (LP-BER). The 9-1-1 complex stimulates DNA polymerase beta (POLB) activity by increasing its affinity for the 3'-OH end of the primer-template and stabilizes POLB to those sites where LP-BER proceeds; endonuclease FEN1 cleavage activity on substrates with double, nick, or gap flaps of distinct sequences and lengths; and DNA ligase I (LIG1) on long-patch base excision repair substrates. The 9-1-1 complex is necessary for the recruitment of RHNO1 to sites of double-stranded breaks (DSB) occurring during the S phase. RAD9A possesses 3'-&gt;5' double stranded DNA exonuclease activity. In Homo sapiens (Human), this protein is Cell cycle checkpoint control protein RAD9A (RAD9A).